The chain runs to 144 residues: 3-dehydroquinate dehydratase (144 aa).

Catalysis depends on Tyr22, which acts as the Proton acceptor. Positions 73, 79, and 86 each coordinate substrate. Catalysis depends on His99, which acts as the Proton donor. Substrate is bound by residues 100 to 101 and Arg110; that span reads LS.

It belongs to the type-II 3-dehydroquinase family. As to quaternary structure, homododecamer.

The catalysed reaction is 3-dehydroquinate = 3-dehydroshikimate + H2O. It functions in the pathway metabolic intermediate biosynthesis; chorismate biosynthesis; chorismate from D-erythrose 4-phosphate and phosphoenolpyruvate: step 3/7. Its function is as follows. Catalyzes a trans-dehydration via an enolate intermediate. The protein is 3-dehydroquinate dehydratase of Geotalea daltonii (strain DSM 22248 / JCM 15807 / FRC-32) (Geobacter daltonii).